The primary structure comprises 171 residues: Phosphopantetheine adenylyltransferase (171 aa).

A substrate-binding site is contributed by Thr9. ATP is bound by residues 9-10 and His17; that span reads TF. Residues Lys41, Leu73, and Arg87 each coordinate substrate. Residues 88–90, Glu98, and 123–129 each bind ATP; these read GLR and YQFISGT.

It belongs to the bacterial CoaD family. Homohexamer. Mg(2+) serves as cofactor.

The protein localises to the cytoplasm. It carries out the reaction (R)-4'-phosphopantetheine + ATP + H(+) = 3'-dephospho-CoA + diphosphate. It participates in cofactor biosynthesis; coenzyme A biosynthesis; CoA from (R)-pantothenate: step 4/5. Functionally, reversibly transfers an adenylyl group from ATP to 4'-phosphopantetheine, yielding dephospho-CoA (dPCoA) and pyrophosphate. This is Phosphopantetheine adenylyltransferase from Paraburkholderia xenovorans (strain LB400).